The sequence spans 264 residues: Thiazole synthase (264 aa).

Lys-106 serves as the catalytic Schiff-base intermediate with DXP. 1-deoxy-D-xylulose 5-phosphate-binding positions include Gly-167, 193 to 194 (AG), and 215 to 216 (NT).

Belongs to the ThiG family. In terms of assembly, homotetramer. Forms heterodimers with either ThiH or ThiS.

Its subcellular location is the cytoplasm. The enzyme catalyses [ThiS sulfur-carrier protein]-C-terminal-Gly-aminoethanethioate + 2-iminoacetate + 1-deoxy-D-xylulose 5-phosphate = [ThiS sulfur-carrier protein]-C-terminal Gly-Gly + 2-[(2R,5Z)-2-carboxy-4-methylthiazol-5(2H)-ylidene]ethyl phosphate + 2 H2O + H(+). It participates in cofactor biosynthesis; thiamine diphosphate biosynthesis. Catalyzes the rearrangement of 1-deoxy-D-xylulose 5-phosphate (DXP) to produce the thiazole phosphate moiety of thiamine. Sulfur is provided by the thiocarboxylate moiety of the carrier protein ThiS. In vitro, sulfur can be provided by H(2)S. This Xylella fastidiosa (strain Temecula1 / ATCC 700964) protein is Thiazole synthase.